The primary structure comprises 653 residues: Alpha-L-iduronidase (653 aa).

A signal peptide spans methionine 1–glutamate 27. 3 residues coordinate alpha-D-mannopyranose: proline 54, leucine 56, and histidine 58. Histidine 91 is an alpha-L-iduronate binding site. Asparagine 110 carries an N-linked (GlcNAc...) asparagine glycan. Alpha-L-iduronate-binding residues include asparagine 181 and glutamate 182. The active-site Proton donor is glutamate 182. A glycan (N-linked (GlcNAc...) asparagine) is linked at asparagine 190. Positions 264, 299, and 305 each coordinate alpha-L-iduronate. The active-site Nucleophile is the glutamate 299. Residue tryptophan 306 participates in alpha-D-mannopyranose binding. The N-linked (GlcNAc...) asparagine glycan is linked to asparagine 336. 2 residues coordinate alpha-L-iduronate: aspartate 349 and arginine 363. N-linked (GlcNAc...) asparagine glycosylation is found at asparagine 372, asparagine 415, and asparagine 451. Alpha-D-mannopyranose contacts are provided by arginine 488 and arginine 492. A beta-D-mannose-binding site is contributed by arginine 492. A disulfide bridge links cysteine 541 with cysteine 577.

The protein belongs to the glycosyl hydrolase 39 family. As to quaternary structure, monomer. In terms of processing, N-glycosylation at Asn-372 contributes to substrate binding and is required for full enzymatic activity. Ubiquitous.

The protein localises to the lysosome. It catalyses the reaction Hydrolysis of unsulfated alpha-L-iduronosidic linkages in dermatan sulfate.. The chain is Alpha-L-iduronidase (IDUA) from Homo sapiens (Human).